The chain runs to 254 residues: NAD-dependent protein deacylase 2 (254 aa).

The Deacetylase sirtuin-type domain occupies 1-254; that stretch reads MDEHSIMQAV…LPALVRRLGV (254 aa). Residue 24 to 44 participates in NAD(+) binding; the sequence is GAGMSADSGLETYRDPETGVW. Positions 69 and 72 each coordinate substrate. 105 to 108 serves as a coordination point for NAD(+); sequence QNID. Catalysis depends on His123, which acts as the Proton acceptor. 4 residues coordinate Zn(2+): Cys131, Cys134, Cys157, and Cys160. NAD(+) is bound by residues 197–199 and Ala241; that span reads GTS.

This sequence belongs to the sirtuin family. Class III subfamily. Requires Zn(2+) as cofactor.

The protein resides in the cytoplasm. The catalysed reaction is N(6)-acetyl-L-lysyl-[protein] + NAD(+) + H2O = 2''-O-acetyl-ADP-D-ribose + nicotinamide + L-lysyl-[protein]. It carries out the reaction N(6)-succinyl-L-lysyl-[protein] + NAD(+) + H2O = 2''-O-succinyl-ADP-D-ribose + nicotinamide + L-lysyl-[protein]. In terms of biological role, NAD-dependent lysine deacetylase and desuccinylase that specifically removes acetyl and succinyl groups on target proteins. Modulates the activities of several proteins which are inactive in their acylated form. This chain is NAD-dependent protein deacylase 2, found in Corynebacterium efficiens (strain DSM 44549 / YS-314 / AJ 12310 / JCM 11189 / NBRC 100395).